A 37-amino-acid chain; its full sequence is Glucagon-1 (37 aa).

Belongs to the glucagon family.

It localises to the secreted. In terms of biological role, glucagon plays a key role in glucose metabolism and homeostasis. Regulates blood glucose by increasing gluconeogenesis and decreasing glycolysis. This is Glucagon-1 from Huso dauricus (Kaluga sturgeon).